The following is an 803-amino-acid chain: Volume-regulated anion channel subunit LRRC8B (803 aa).

The Cytoplasmic portion of the chain corresponds to Met-1–Asp-25. Residues Val-26 to Gln-46 traverse the membrane as a helical segment. At Leu-47 to Lys-119 the chain is on the extracellular side. 2 disulfide bridges follow: Cys-55-Cys-304 and Cys-109-Cys-289. Residue Asn-78 is glycosylated (N-linked (GlcNAc...) asparagine). The chain crosses the membrane as a helical span at residues Phe-120–Leu-140. Residues His-141–Gln-261 lie on the Cytoplasmic side of the membrane. Ser-186 and Ser-196 each carry phosphoserine. Residues Ile-262–His-282 form a helical membrane-spanning segment. Topologically, residues Ile-283–Ser-307 are extracellular. Residues Leu-308–Leu-328 traverse the membrane as a helical segment. Residues Thr-329–Cys-803 are Cytoplasmic-facing. 13 LRR repeats span residues Asn-464 to Glu-486, Asn-488 to Leu-509, Asn-511 to Glu-532, Asn-539 to Leu-559, Ser-562 to Lys-582, Asn-586 to Leu-607, Asn-609 to Gln-630, Asn-634 to Leu-655, Asn-657 to Cys-678, Lys-680 to Leu-701, Asn-703 to Cys-724, Lys-726 to Leu-747, and Asn-749 to Gln-771.

Belongs to the LRRC8 family. In terms of assembly, heterohexamer; oligomerizes with other LRRC8 proteins (LRRC8A, LRRC8C, LRRC8D and/or LRRC8E) to form a heterohexamer. In vivo, the subunit composition may depend primarily on expression levels, and heterooligomeric channels containing various proportions of the different LRRC8 proteins may coexist.

The protein localises to the cell membrane. Its subcellular location is the endoplasmic reticulum membrane. The enzyme catalyses chloride(in) = chloride(out). It carries out the reaction iodide(out) = iodide(in). It catalyses the reaction taurine(out) = taurine(in). In terms of biological role, non-essential component of the volume-regulated anion channel (VRAC, also named VSOAC channel), an anion channel required to maintain a constant cell volume in response to extracellular or intracellular osmotic changes. The VRAC channel conducts iodide better than chloride and can also conduct organic osmolytes like taurine. Channel activity requires LRRC8A plus at least one other family member (LRRC8B, LRRC8C, LRRC8D or LRRC8E); channel characteristics depend on the precise subunit composition. In Homo sapiens (Human), this protein is Volume-regulated anion channel subunit LRRC8B.